Consider the following 58-residue polypeptide: Keratin-associated protein 19-6 (58 aa).

It belongs to the KRTAP type 19 family. Interacts with hair keratins.

In the hair cortex, hair keratin intermediate filaments are embedded in an interfilamentous matrix, consisting of hair keratin-associated proteins (KRTAP), which are essential for the formation of a rigid and resistant hair shaft through their extensive disulfide bond cross-linking with abundant cysteine residues of hair keratins. The matrix proteins include the high-sulfur and high-glycine-tyrosine keratins. The chain is Keratin-associated protein 19-6 (KRTAP19-6) from Homo sapiens (Human).